The following is a 253-amino-acid chain: Indole-3-glycerol phosphate synthase (253 aa).

The protein belongs to the TrpC family.

The catalysed reaction is 1-(2-carboxyphenylamino)-1-deoxy-D-ribulose 5-phosphate + H(+) = (1S,2R)-1-C-(indol-3-yl)glycerol 3-phosphate + CO2 + H2O. It functions in the pathway amino-acid biosynthesis; L-tryptophan biosynthesis; L-tryptophan from chorismate: step 4/5. This is Indole-3-glycerol phosphate synthase from Bacillus thuringiensis subsp. konkukian (strain 97-27).